Consider the following 361-residue polypeptide: 5-exo-hydroxycamphor dehydrogenase (361 aa).

Residues cysteine 40, histidine 62, cysteine 98, cysteine 101, cysteine 104, and cysteine 170 each coordinate Zn(2+).

This sequence belongs to the zinc-containing alcohol dehydrogenase family. Zn(2+) serves as cofactor.

It carries out the reaction (1R,4R,5R)-5-hydroxycamphor + NAD(+) = (1R,4R)-bornane-2,5-dione + NADH + H(+). Its pathway is terpene metabolism; (R)-camphor degradation. The protein is 5-exo-hydroxycamphor dehydrogenase (camD) of Pseudomonas putida (Arthrobacter siderocapsulatus).